The primary structure comprises 579 residues: Leucine-rich repeat-containing protein 15 (579 aa).

The first 21 residues, Met-1–Ala-21, serve as a signal peptide directing secretion. The 32-residue stretch at Tyr-22–Trp-53 folds into the LRRNT domain. The Extracellular segment spans residues Tyr-22–Gly-536. LRR repeat units lie at residues Asn-54–Asn-75, Ala-78–Asn-99, Ser-102–Asp-123, Asn-126–Gln-147, Asn-150–His-171, Gly-174–His-195, Asn-198–Ala-219, Asn-222–Asn-243, Asn-246–Gln-267, His-270–Pro-291, Asn-294–His-315, Gln-318–Gly-339, Asn-342–Ser-363, Asn-366–Asn-387, and Gly-390–His-411. N-linked (GlcNAc...) asparagine glycosylation is present at Asn-75. An N-linked (GlcNAc...) asparagine glycan is attached at Asn-369. The region spanning Asn-423–Gly-473 is the LRRCT domain. The segment at Val-476–Thr-509 is disordered. A compositionally biased stretch (low complexity) spans Ser-485–Thr-506. A helical membrane pass occupies residues Leu-537–Ile-557. Residues Cys-558–Cys-579 lie on the Cytoplasmic side of the membrane.

In terms of tissue distribution, expressed in chodrocytes (at protein level).

The protein localises to the cell membrane. The sequence is that of Leucine-rich repeat-containing protein 15 (Lrrc15) from Mus musculus (Mouse).